The following is a 251-amino-acid chain: Probable phosphatase Sputcn32_1369 (251 aa).

Residues His8, His10, His16, His41, Glu74, His102, His132, Asp193, and His195 each coordinate Zn(2+).

The protein belongs to the PHP family. Zn(2+) is required as a cofactor.

The protein is Probable phosphatase Sputcn32_1369 of Shewanella putrefaciens (strain CN-32 / ATCC BAA-453).